Consider the following 183-residue polypeptide: MTVQQPKRRPLSRYLKDFKHSQTHCAHCHKLLDRITLVRRGKIVNKIAISQLDMLLDDAAWQREQKEWVALCRFCGDLHCKKQSDFFDIIGFKQYLFEQTEMSHGTVREYVVRLRRLGNYLSEQNISHDLLQDGFLDESLAPWLPETSTNNYRIALRKYQQYKAHQQIAPRQKSPFTASSDIY.

Functionally, may regulate sigma factor activity. The chain is Protein FliZ (fliZ) from Salmonella typhi.